A 289-amino-acid polypeptide reads, in one-letter code: Protease HtpX (289 aa).

A run of 2 helical transmembrane segments spans residues 5–25 (IVLF…VMSL) and 33–53 (MSGL…ISLL). H140 lines the Zn(2+) pocket. Residue E141 is part of the active site. A Zn(2+)-binding site is contributed by H144. Transmembrane regions (helical) follow at residues 155-175 (LLQG…GGFI) and 193-213 (GIVL…TMWF). Residue E218 coordinates Zn(2+).

It belongs to the peptidase M48B family. The cofactor is Zn(2+).

It is found in the cell inner membrane. This chain is Protease HtpX, found in Xylella fastidiosa (strain M12).